The following is a 448-amino-acid chain: NADP-specific glutamate dehydrogenase (448 aa).

Substrate-binding residues include K88, Q109, and K112. The Proton donor role is filled by K124. Substrate is bound at residue G163. Residues T207 and N238 each coordinate NADP(+). S375 lines the substrate pocket.

Belongs to the Glu/Leu/Phe/Val dehydrogenases family. Homohexamer.

It catalyses the reaction L-glutamate + NADP(+) + H2O = 2-oxoglutarate + NH4(+) + NADPH + H(+). In terms of biological role, catalyzes the reversible oxidative deamination of glutamate to alpha-ketoglutarate and ammonia. This chain is NADP-specific glutamate dehydrogenase (gdhA), found in Psychrobacter sp. (strain TAD1).